The sequence spans 377 residues: Carbamoyl phosphate synthase small chain (377 aa).

Positions 1-186 (MNTPALLVLA…LGKGFVTPDK (186 aa)) are CPSase. Positions 47, 238, and 240 each coordinate L-glutamine. The Glutamine amidotransferase type-1 domain occupies 190 to 377 (HVVAYDFGVK…IGNMKAAKQA (188 aa)). Cysteine 266 functions as the Nucleophile in the catalytic mechanism. L-glutamine contacts are provided by leucine 267, glutamine 270, asparagine 308, glycine 310, and phenylalanine 311. Catalysis depends on residues histidine 350 and glutamate 352.

Belongs to the CarA family. Composed of two chains; the small (or glutamine) chain promotes the hydrolysis of glutamine to ammonia, which is used by the large (or ammonia) chain to synthesize carbamoyl phosphate. Tetramer of heterodimers (alpha,beta)4.

It carries out the reaction hydrogencarbonate + L-glutamine + 2 ATP + H2O = carbamoyl phosphate + L-glutamate + 2 ADP + phosphate + 2 H(+). The enzyme catalyses L-glutamine + H2O = L-glutamate + NH4(+). Its pathway is amino-acid biosynthesis; L-arginine biosynthesis; carbamoyl phosphate from bicarbonate: step 1/1. It participates in pyrimidine metabolism; UMP biosynthesis via de novo pathway; (S)-dihydroorotate from bicarbonate: step 1/3. In terms of biological role, small subunit of the glutamine-dependent carbamoyl phosphate synthetase (CPSase). CPSase catalyzes the formation of carbamoyl phosphate from the ammonia moiety of glutamine, carbonate, and phosphate donated by ATP, constituting the first step of 2 biosynthetic pathways, one leading to arginine and/or urea and the other to pyrimidine nucleotides. The small subunit (glutamine amidotransferase) binds and cleaves glutamine to supply the large subunit with the substrate ammonia. The sequence is that of Carbamoyl phosphate synthase small chain from Neisseria gonorrhoeae.